A 251-amino-acid chain; its full sequence is Hydroxyacylglutathione hydrolase (251 aa).

Zn(2+)-binding residues include His-53, His-55, Asp-57, His-58, His-110, Asp-127, and His-165.

It belongs to the metallo-beta-lactamase superfamily. Glyoxalase II family. As to quaternary structure, monomer. Zn(2+) is required as a cofactor.

It catalyses the reaction an S-(2-hydroxyacyl)glutathione + H2O = a 2-hydroxy carboxylate + glutathione + H(+). It functions in the pathway secondary metabolite metabolism; methylglyoxal degradation; (R)-lactate from methylglyoxal: step 2/2. Functionally, thiolesterase that catalyzes the hydrolysis of S-D-lactoyl-glutathione to form glutathione and D-lactic acid. This chain is Hydroxyacylglutathione hydrolase, found in Yersinia pestis.